A 100-amino-acid chain; its full sequence is Small ribosomal subunit protein uS14c (100 aa).

It belongs to the universal ribosomal protein uS14 family. In terms of assembly, part of the 30S ribosomal subunit.

Its subcellular location is the plastid. In terms of biological role, binds 16S rRNA, required for the assembly of 30S particles. In Epifagus virginiana (Beechdrops), this protein is Small ribosomal subunit protein uS14c.